The primary structure comprises 201 residues: 7-methyl-GTP pyrophosphatase (201 aa).

Asp73 serves as the catalytic Proton acceptor.

This sequence belongs to the Maf family. YceF subfamily. It depends on a divalent metal cation as a cofactor.

Its subcellular location is the cytoplasm. It carries out the reaction N(7)-methyl-GTP + H2O = N(7)-methyl-GMP + diphosphate + H(+). Functionally, nucleoside triphosphate pyrophosphatase that hydrolyzes 7-methyl-GTP (m(7)GTP). May have a dual role in cell division arrest and in preventing the incorporation of modified nucleotides into cellular nucleic acids. The polypeptide is 7-methyl-GTP pyrophosphatase (Thiobacillus denitrificans (strain ATCC 25259 / T1)).